Reading from the N-terminus, the 604-residue chain is Aspartate--tRNA(Asp/Asn) ligase (604 aa).

Residue Glu175 participates in L-aspartate binding. The segment at 199–202 is aspartate; it reads QQFK. The L-aspartate site is built by Arg221 and His456. 221 to 223 serves as a coordination point for ATP; sequence RDE. Glu496 is an ATP binding site. Arg503 is an L-aspartate binding site. 548 to 551 serves as a coordination point for ATP; the sequence is GVDR.

Belongs to the class-II aminoacyl-tRNA synthetase family. Type 1 subfamily. In terms of assembly, homodimer.

The protein localises to the cytoplasm. The enzyme catalyses tRNA(Asx) + L-aspartate + ATP = L-aspartyl-tRNA(Asx) + AMP + diphosphate. Aspartyl-tRNA synthetase with relaxed tRNA specificity since it is able to aspartylate not only its cognate tRNA(Asp) but also tRNA(Asn). Reaction proceeds in two steps: L-aspartate is first activated by ATP to form Asp-AMP and then transferred to the acceptor end of tRNA(Asp/Asn). The sequence is that of Aspartate--tRNA(Asp/Asn) ligase from Methylobacterium sp. (strain 4-46).